The following is a 334-amino-acid chain: Putative heat shock protein HSP 90-alpha A5 (334 aa).

Residues 55 to 107 are disordered; sequence KRNKQVSDAEAEKKEDKRKKKKESNDKPEIEDVGSDEEEEKKDADKKKKKSKE. A compositionally biased stretch (basic and acidic residues) spans 59–69; it reads QVSDAEAEKKE. Residues 85–94 show a composition bias toward acidic residues; that stretch reads EDVGSDEEEE. A Phosphoserine modification is found at Ser89. Residues 234–267 adopt a coiled-coil conformation; it reads LELPEDEEEKKKQEEKKTKFENLCKIMKDMLEKK. Residues 314–334 form a disordered region; that stretch reads EMPPLRGGDDTSRMEEVGGSG. The segment covering 320 to 334 has biased composition (basic and acidic residues); that stretch reads GGDDTSRMEEVGGSG. A TPR repeat-binding motif is present at residues 327–331; sequence MEEVG.

Belongs to the heat shock protein 90 family. Homodimer.

The protein resides in the cytoplasm. Putative molecular chaperone that may promote the maturation, structural maintenance and proper regulation of specific target proteins. This Homo sapiens (Human) protein is Putative heat shock protein HSP 90-alpha A5 (HSP90AA5P).